Here is a 236-residue protein sequence, read N- to C-terminus: Ribonuclease 3 (236 aa).

One can recognise an RNase III domain in the interval 8–130; that stretch reads FRRLSQALDY…TFAAVSFDAD (123 aa). Glu43 lines the Mg(2+) pocket. Asp47 is an active-site residue. Asp116 and Glu119 together coordinate Mg(2+). The active site involves Glu119. The 71-residue stretch at 157–227 folds into the DRBM domain; sequence DAKTRLQEAL…AEAALTLLEQ (71 aa).

The protein belongs to the ribonuclease III family. As to quaternary structure, homodimer. The cofactor is Mg(2+).

The protein localises to the cytoplasm. It carries out the reaction Endonucleolytic cleavage to 5'-phosphomonoester.. Digests double-stranded RNA. Involved in the processing of primary rRNA transcript to yield the immediate precursors to the large and small rRNAs (23S and 16S). Processes some mRNAs, and tRNAs when they are encoded in the rRNA operon. Processes pre-crRNA and tracrRNA of type II CRISPR loci if present in the organism. This chain is Ribonuclease 3, found in Chromobacterium violaceum (strain ATCC 12472 / DSM 30191 / JCM 1249 / CCUG 213 / NBRC 12614 / NCIMB 9131 / NCTC 9757 / MK).